The chain runs to 132 residues: MNIIEQLEREEVARLAKTIPDFEPGDTLIVNVRVKEGERTRVQAYEGVCIARSGGGLNESFTVRKISYGEGVERVFPVHSPMIDSIKVARRGKVRRAKLYYLRDRRGKSARIVERTDRYKAKDTPAAAPAAE.

Belongs to the bacterial ribosomal protein bL19 family.

Functionally, this protein is located at the 30S-50S ribosomal subunit interface and may play a role in the structure and function of the aminoacyl-tRNA binding site. The chain is Large ribosomal subunit protein bL19 from Methylobacterium radiotolerans (strain ATCC 27329 / DSM 1819 / JCM 2831 / NBRC 15690 / NCIMB 10815 / 0-1).